Here is an 86-residue protein sequence, read N- to C-terminus: RNA-binding protein Hfq (86 aa).

Positions 12 to 73 (DIFLNQVRKE…ISTISPQKPV (62 aa)) constitute a Sm domain.

Belongs to the Hfq family. In terms of assembly, homohexamer.

RNA chaperone that binds small regulatory RNA (sRNAs) and mRNAs to facilitate mRNA translational regulation in response to envelope stress, environmental stress and changes in metabolite concentrations. Also binds with high specificity to tRNAs. This chain is RNA-binding protein Hfq, found in Caldanaerobacter subterraneus subsp. tengcongensis (strain DSM 15242 / JCM 11007 / NBRC 100824 / MB4) (Thermoanaerobacter tengcongensis).